A 363-amino-acid polypeptide reads, in one-letter code: tRNA dimethylallyltransferase (363 aa).

65-72 is an ATP binding site; that stretch reads GPTASGKS. 67–72 is a substrate binding site; that stretch reads TASGKS. Interaction with substrate tRNA stretches follow at residues 90 to 93 and 214 to 218; these read DSMQ and QRLIR.

The protein belongs to the IPP transferase family. Monomer. Mg(2+) is required as a cofactor.

It carries out the reaction adenosine(37) in tRNA + dimethylallyl diphosphate = N(6)-dimethylallyladenosine(37) in tRNA + diphosphate. Its function is as follows. Catalyzes the transfer of a dimethylallyl group onto the adenine at position 37 in tRNAs that read codons beginning with uridine, leading to the formation of N6-(dimethylallyl)adenosine (i(6)A). In Rickettsia rickettsii (strain Sheila Smith), this protein is tRNA dimethylallyltransferase.